The following is a 427-amino-acid chain: Serine hydroxymethyltransferase (427 aa).

(6S)-5,6,7,8-tetrahydrofolate-binding positions include Leu-122 and 126–128 (GHL). An N6-(pyridoxal phosphate)lysine modification is found at Lys-231. Position 355 to 357 (355 to 357 (SPF)) interacts with (6S)-5,6,7,8-tetrahydrofolate.

This sequence belongs to the SHMT family. Homodimer. Requires pyridoxal 5'-phosphate as cofactor.

It is found in the cytoplasm. It carries out the reaction (6R)-5,10-methylene-5,6,7,8-tetrahydrofolate + glycine + H2O = (6S)-5,6,7,8-tetrahydrofolate + L-serine. Its pathway is one-carbon metabolism; tetrahydrofolate interconversion. The protein operates within amino-acid biosynthesis; glycine biosynthesis; glycine from L-serine: step 1/1. Catalyzes the reversible interconversion of serine and glycine with tetrahydrofolate (THF) serving as the one-carbon carrier. This reaction serves as the major source of one-carbon groups required for the biosynthesis of purines, thymidylate, methionine, and other important biomolecules. Also exhibits THF-independent aldolase activity toward beta-hydroxyamino acids, producing glycine and aldehydes, via a retro-aldol mechanism. The protein is Serine hydroxymethyltransferase of Nostoc punctiforme (strain ATCC 29133 / PCC 73102).